A 163-amino-acid polypeptide reads, in one-letter code: ADP-ribosylation factor-like protein 2-binding protein (163 aa).

The protein belongs to the ARL2BP family. Interacts with GTP bound ARL2 and ARL3; the complex ARL2-ARL2BP as well as ARL2BP alone, binds to SLC25A4/ANT1. Interaction with ARL2 may be required for targeting to cilia basal body. Interacts with STAT3; interaction is enhanced with ARL2. Found in a complex with ARL2BP, ARL2 and SLC25A6. Found in a complex with ARL2, ARL2BP and SLC25A4. Interacts with STAT2, STAT3 and STAT4. Widely expressed, with most abundant activity in brain, especially in hippocampus and cortex. Also expressed in lung, cerebellum, liver, kidney, retina, spleen, muscle and heart (at protein level).

The protein localises to the cytoplasm. It is found in the mitochondrion intermembrane space. It localises to the cytoskeleton. The protein resides in the microtubule organizing center. Its subcellular location is the centrosome. The protein localises to the nucleus. It is found in the cilium basal body. Functionally, together with ARL2, plays a role in the nuclear translocation, retention and transcriptional activity of STAT3. May play a role as an effector of ARL2. This Mus musculus (Mouse) protein is ADP-ribosylation factor-like protein 2-binding protein (Arl2bp).